Consider the following 91-residue polypeptide: Small ribosomal subunit protein uS19 (91 aa).

The protein belongs to the universal ribosomal protein uS19 family.

In terms of biological role, protein S19 forms a complex with S13 that binds strongly to the 16S ribosomal RNA. The sequence is that of Small ribosomal subunit protein uS19 from Prochlorococcus marinus subsp. pastoris (strain CCMP1986 / NIES-2087 / MED4).